The primary structure comprises 502 residues: Probable glycine dehydrogenase (decarboxylating) subunit 2 (502 aa).

Lys273 carries the N6-(pyridoxal phosphate)lysine modification.

It belongs to the GcvP family. C-terminal subunit subfamily. The glycine cleavage system is composed of four proteins: P, T, L and H. In this organism, the P 'protein' is a heterodimer of two subunits. Pyridoxal 5'-phosphate serves as cofactor.

It catalyses the reaction N(6)-[(R)-lipoyl]-L-lysyl-[glycine-cleavage complex H protein] + glycine + H(+) = N(6)-[(R)-S(8)-aminomethyldihydrolipoyl]-L-lysyl-[glycine-cleavage complex H protein] + CO2. Its function is as follows. The glycine cleavage system catalyzes the degradation of glycine. The P protein binds the alpha-amino group of glycine through its pyridoxal phosphate cofactor; CO(2) is released and the remaining methylamine moiety is then transferred to the lipoamide cofactor of the H protein. In Thermococcus kodakarensis (strain ATCC BAA-918 / JCM 12380 / KOD1) (Pyrococcus kodakaraensis (strain KOD1)), this protein is Probable glycine dehydrogenase (decarboxylating) subunit 2.